Consider the following 252-residue polypeptide: Isoprenyl transferase 2 (252 aa).

Asp26 is a catalytic residue. Asp26 lines the Mg(2+) pocket. Substrate-binding positions include Gly27–Arg30, Trp31, Arg39, His43, and Ser71–Glu73. The active-site Proton acceptor is Asn74. Substrate is bound by residues Trp75, Arg77, Arg194, and Arg200–Ser202. Glu213 serves as a coordination point for Mg(2+).

Belongs to the UPP synthase family. In terms of assembly, homodimer. Requires Mg(2+) as cofactor.

In terms of biological role, catalyzes the condensation of isopentenyl diphosphate (IPP) with allylic pyrophosphates generating different type of terpenoids. The protein is Isoprenyl transferase 2 of Bradyrhizobium diazoefficiens (strain JCM 10833 / BCRC 13528 / IAM 13628 / NBRC 14792 / USDA 110).